Here is a 617-residue protein sequence, read N- to C-terminus: Secretogranin-2 (617 aa).

Residues methionine 1–phenylalanine 30 form the signal peptide. A Sulfotyrosine modification is found at tyrosine 153. Serine 176 and serine 270 each carry phosphoserine. Composition is skewed to basic and acidic residues over residues threonine 261–arginine 286 and glutamate 295–glutamate 307. Positions threonine 261–glutamate 307 are disordered. A phosphoserine mark is found at serine 434, serine 532, serine 555, and serine 556.

Belongs to the chromogranin/secretogranin protein family. In terms of assembly, interacts with Secretogranin III/SCG3.

The protein resides in the secreted. Functionally, neuroendocrine protein of the granin family that regulates the biogenesis of secretory granules. In Mus musculus (Mouse), this protein is Secretogranin-2 (Scg2).